Here is a 378-residue protein sequence, read N- to C-terminus: Chaperone protein DnaJ (378 aa).

The 66-residue stretch at 5 to 70 folds into the J domain; it reads DYYEVLGVAK…QKRAAYDQYG (66 aa). Residues 138–216 form a CR-type zinc finger; the sequence is GYDTQIRVPS…CHGSGKVKET (79 aa). Residues Cys-151, Cys-154, Cys-168, Cys-171, Cys-190, Cys-193, Cys-204, and Cys-207 each contribute to the Zn(2+) site. CXXCXGXG motif repeat units follow at residues 151–158, 168–175, 190–197, and 204–211; these read CEVCHGSG, CPTCHGQG, CPKCHGTG, and CVHCHGSG.

This sequence belongs to the DnaJ family. Homodimer. Zn(2+) serves as cofactor.

It is found in the cytoplasm. Functionally, participates actively in the response to hyperosmotic and heat shock by preventing the aggregation of stress-denatured proteins and by disaggregating proteins, also in an autonomous, DnaK-independent fashion. Unfolded proteins bind initially to DnaJ; upon interaction with the DnaJ-bound protein, DnaK hydrolyzes its bound ATP, resulting in the formation of a stable complex. GrpE releases ADP from DnaK; ATP binding to DnaK triggers the release of the substrate protein, thus completing the reaction cycle. Several rounds of ATP-dependent interactions between DnaJ, DnaK and GrpE are required for fully efficient folding. Also involved, together with DnaK and GrpE, in the DNA replication of plasmids through activation of initiation proteins. This Burkholderia lata (strain ATCC 17760 / DSM 23089 / LMG 22485 / NCIMB 9086 / R18194 / 383) protein is Chaperone protein DnaJ.